We begin with the raw amino-acid sequence, 145 residues long: D-aminoacyl-tRNA deacylase (145 aa).

Residues 137 to 138 (GP) carry the Gly-cisPro motif, important for rejection of L-amino acids motif.

Belongs to the DTD family. Homodimer.

The protein resides in the cytoplasm. It carries out the reaction glycyl-tRNA(Ala) + H2O = tRNA(Ala) + glycine + H(+). The catalysed reaction is a D-aminoacyl-tRNA + H2O = a tRNA + a D-alpha-amino acid + H(+). Its function is as follows. An aminoacyl-tRNA editing enzyme that deacylates mischarged D-aminoacyl-tRNAs. Also deacylates mischarged glycyl-tRNA(Ala), protecting cells against glycine mischarging by AlaRS. Acts via tRNA-based rather than protein-based catalysis; rejects L-amino acids rather than detecting D-amino acids in the active site. By recycling D-aminoacyl-tRNA to D-amino acids and free tRNA molecules, this enzyme counteracts the toxicity associated with the formation of D-aminoacyl-tRNA entities in vivo and helps enforce protein L-homochirality. The polypeptide is D-aminoacyl-tRNA deacylase (Rhodococcus jostii (strain RHA1)).